The primary structure comprises 134 residues: Replication enhancer protein (134 aa).

Belongs to the geminiviridae replication enhancer protein family. As to quaternary structure, homooligomer. Interacts with the replication-associated protein (REP). Interacts with host proliferating cell nuclear antigen (PCNA). Interacts with host retinoblastoma-related protein 1 (RBR1), and may thereby deregulate the host cell cycle. Oligomerization and interaction with PCNA are necessary for optimal replication enhancement.

In terms of biological role, increases viral DNA accumulation. Enhances infectivity and symptom expression. This chain is Replication enhancer protein, found in Cynanchum acutum (Tomato).